The sequence spans 510 residues: Glycosyl hydrolase YngK (510 aa).

An N-terminal signal peptide occupies residues 1-30 (MKVCQKSIVRFLVSLIIGTFVISVPFMANA).

Belongs to the glycosyl hydrolase-like 10 (GHL10) family.

The sequence is that of Glycosyl hydrolase YngK (yngK) from Bacillus subtilis (strain 168).